Consider the following 773-residue polypeptide: E3 ubiquitin-protein ligase msl-2 (773 aa).

The Zn(2+) site is built by C41, C44, C59, H61, C64, C67, C78, and C84. The segment at 41–85 (CVVCCQLLVDPYSPKGKRCQHNVCRLCLRGKKHLFPSCTQCEGCS) adopts an RING-type zinc-finger fold. Residues 424–468 (VQTELQDAESLQKDFEDAKAAAEEAKEKEKDLHAISAELQKEDSD) adopt a coiled-coil conformation. The segment at 460 to 525 (AELQKEDSDE…EKVKPPKPKC (66 aa)) is disordered. The region spanning 520-571 (PPKPKCRCGISGSSNTLTTCRNSRCPCYKSYNSCAGCHCVCCKNPHKEDYVE) is the CXC MSL2-type domain. Zn(2+) contacts are provided by C525, C527, C539, C544, C546, C553, C556, C558, and C561. A C-terminal disordered region (CTD) region spans residues 571 to 773 (ESDEDDDLED…EEIMSGSDDL (203 aa)). Over residues 572–581 (SDEDDDLEDF) the composition is skewed to acidic residues. The segment at 572 to 616 (SDEDDDLEDFEMPKDVPEPMTQSEEPVVAEPRQEENSMAPPDSSA) is disordered. The segment at 620–685 (LVPLNNLQQS…SLPQYAYIMP (66 aa)) is clamp-binding domain (CBD). The tract at residues 650–708 (QGSKPLDPVTVGFTIRVQLQHTDGFGSLPQYAYIMPTIDPPNPPAPSLSPPPPPAPDRE) is pro/Bas region. Pro residues predominate over residues 687–704 (IDPPNPPAPSLSPPPPPA). The disordered stretch occupies residues 687-773 (IDPPNPPAPS…EEIMSGSDDL (87 aa)). Over residues 705 to 714 (PDREVIEPPA) the composition is skewed to basic and acidic residues. Positions 715–726 (KKFRTSRTRRGR) are enriched in basic residues. Residues 742 to 759 (GSRSNSAAGDRSSATDNA) are compositionally biased toward polar residues.

Belongs to the MSL2 family. As to quaternary structure, component of the male-specific lethal (MSL) histone acetyltransferase complex, composed of mof, mle, msl-1, msl-2 and msl-3 proteins, as well as roX1 and roX2 non-coding RNAs. When not associated with chromatin, the MSL complex associates with msl-2 mRNAs, possibly to regulate the amount of available MSL complex. Interacts with Clamp; promoting cooperative binding to DNA PionX sites and recruitment of the MSL complex to chromatin. Post-translationally, autoubiquitinated.

It localises to the nucleus. The protein localises to the chromosome. The enzyme catalyses S-ubiquitinyl-[E2 ubiquitin-conjugating enzyme]-L-cysteine + [acceptor protein]-L-lysine = [E2 ubiquitin-conjugating enzyme]-L-cysteine + N(6)-ubiquitinyl-[acceptor protein]-L-lysine.. Its pathway is protein modification; protein ubiquitination. In terms of biological role, limiting component of the male-specific lethal (MSL) histone acetyltransferase complex, a multiprotein complex essential for elevating transcription of the single X chromosome in the male (X chromosome dosage compensation). The MSL complex specifically associates with the single X chromosome in males and mediates formation of H4K16ac, promoting a two-fold activation of X chromosome. Msl-2 is only produced in males, constituting the limiting component of the MSL complex. Within the MSL complex, msl-2 mediates the selective binding to the X chromosome and recruitment of the MSL complex via two different mechanisms. Recognizes DNA motifs that are enriched on X chromosome, named PionX sites, which are characterized by sequence features and distinct DNA conformation (base roll). Specific recognition of the X chromosome is also mediated by the formation of a gel-like state: msl-2 undergoes liquid-liquid phase separation upon binding to roX1 and roX2 non-coding RNAs, leading to nucleate the MSL complex on the X chromosome. Msl-2 is also required for translation and/or stability of msl-1 in males. Also acts as an E3 ubiquitin ligase: in complex with msl-1, mediates ubiquitination of histone H2B at 'Lys-34' (H2BK34Ub). Also catalyzes ubiquitination of msl-1, msl-3 and mof components of the MSL complex. In Drosophila melanogaster (Fruit fly), this protein is E3 ubiquitin-protein ligase msl-2.